We begin with the raw amino-acid sequence, 99 residues long: Photosystem II reaction center Psb28 protein (99 aa).

Belongs to the Psb28 family. Part of the photosystem II complex.

The protein resides in the cell inner membrane. This is Photosystem II reaction center Psb28 protein from Gloeobacter violaceus (strain ATCC 29082 / PCC 7421).